A 145-amino-acid chain; its full sequence is Large ribosomal subunit protein uL15 (145 aa).

A disordered region spans residues 1 to 57 (MKLNDLSPAPGSRREKHRPGRGIGSGLGKTGGRGHKGQTSRSGGTIAPGFEGGQQPL). A compositionally biased stretch (gly residues) spans 21-31 (RGIGSGLGKTG).

The protein belongs to the universal ribosomal protein uL15 family. As to quaternary structure, part of the 50S ribosomal subunit.

In terms of biological role, binds to the 23S rRNA. This Pseudomonas fluorescens (strain SBW25) protein is Large ribosomal subunit protein uL15.